The primary structure comprises 180 residues: Protein GrpE (180 aa).

Belongs to the GrpE family. Homodimer.

The protein localises to the cytoplasm. Its function is as follows. Participates actively in the response to hyperosmotic and heat shock by preventing the aggregation of stress-denatured proteins, in association with DnaK and GrpE. It is the nucleotide exchange factor for DnaK and may function as a thermosensor. Unfolded proteins bind initially to DnaJ; upon interaction with the DnaJ-bound protein, DnaK hydrolyzes its bound ATP, resulting in the formation of a stable complex. GrpE releases ADP from DnaK; ATP binding to DnaK triggers the release of the substrate protein, thus completing the reaction cycle. Several rounds of ATP-dependent interactions between DnaJ, DnaK and GrpE are required for fully efficient folding. The protein is Protein GrpE of Picrophilus torridus (strain ATCC 700027 / DSM 9790 / JCM 10055 / NBRC 100828 / KAW 2/3).